A 423-amino-acid polypeptide reads, in one-letter code: Sphingomyelin phosphodiesterase 2 (423 aa).

E49 provides a ligand contact to Mg(2+). H272 acts as the Proton acceptor in catalysis. The next 2 membrane-spanning stretches (helical) occupy residues 330 to 350 and 354 to 374; these read VIGL…GGGA and AILL…FYLF. The segment at 400–423 is disordered; sequence QDLGPEPQPALLLGQQEGDRTKEQ.

The protein belongs to the neutral sphingomyelinase family. Mg(2+) serves as cofactor.

Its subcellular location is the cell membrane. It carries out the reaction a sphingomyelin + H2O = phosphocholine + an N-acylsphing-4-enine + H(+). The enzyme catalyses an N-(acyl)-sphingosylphosphocholine + H2O = an N-acyl-sphingoid base + phosphocholine + H(+). The catalysed reaction is 1-O-octadecyl-sn-glycero-3-phosphocholine + H2O = 1-O-octadecyl-sn-glycerol + phosphocholine + H(+). It catalyses the reaction 1-O-hexadecyl-sn-glycero-3-phosphocholine + H2O = 1-O-hexadecyl-sn-glycerol + phosphocholine + H(+). It carries out the reaction 1-hexadecanoyl-sn-glycero-3-phosphocholine + H2O = 1-hexadecanoyl-sn-glycerol + phosphocholine + H(+). The enzyme catalyses a sphingosylphosphocholine + H2O = a sphingoid base + phosphocholine + H(+). Its pathway is lipid metabolism; sphingolipid metabolism. Functionally, catalyzes, at least in vitro, the hydrolysis of sphingomyelin to form ceramide and phosphocholine. Also hydrolyzes 1-O-alkyl-2-lyso-sn-glycero-3-phosphocholine (lyso-platelet-activating factor) in vivo. Also acts on 1-acyl-2-lyso-sn-glycero-3-phosphocholine (lyso-PC) and sphingosylphosphocholine. This chain is Sphingomyelin phosphodiesterase 2, found in Homo sapiens (Human).